Consider the following 441-residue polypeptide: E3 ubiquitin-protein ligase APD1 (441 aa).

2 helical membrane-spanning segments follow: residues 60–80 (SNLYCFSLALLIWFFASFILI) and 305–325 (IAYVIGTGVVICFMLVAIQFC). The segment at 390–429 (CAICFDVPRDCFFLPCGHSVSCYECGTTMQEADGSCPICR) adopts an RING-type zinc-finger fold.

Expressed in the shoot apical meristems (SAM), root tips and inflorescences, and, at low levels, in floral buds and pollen.

It localises to the endomembrane system. It is found in the vacuole membrane. The enzyme catalyses S-ubiquitinyl-[E2 ubiquitin-conjugating enzyme]-L-cysteine + [acceptor protein]-L-lysine = [E2 ubiquitin-conjugating enzyme]-L-cysteine + N(6)-ubiquitinyl-[acceptor protein]-L-lysine.. The protein operates within protein modification; protein ubiquitination. Functionally, involved in pollen mitosis II (PMII) regulation during male gametogenesis. The chain is E3 ubiquitin-protein ligase APD1 from Arabidopsis thaliana (Mouse-ear cress).